Reading from the N-terminus, the 323-residue chain is Serine racemase (323 aa).

Residues Ser-32, Ser-33, and Lys-52 each contribute to the ATP site. Lys-57 serves as the catalytic Proton acceptor. At Lys-57 the chain carries Lysino-D-alanine (Lys); alternate. Lys-57 bears the N6-(pyridoxal phosphate)lysine; alternate mark. Thr-79 lines the Ca(2+) pocket. Ser-82 acts as the Proton acceptor in catalysis. Asn-84 provides a ligand contact to pyridoxal 5'-phosphate. Positions 87 and 119 each coordinate ATP. Mg(2+) is bound at residue Asp-176. Residues Gly-183, Gly-184, Gly-185, Gly-186, and Leu-187 each coordinate pyridoxal 5'-phosphate. The Ca(2+) site is built by Glu-208, Gly-212, and Asp-214. Positions 208, 212, and 214 each coordinate Mg(2+). 3 residues coordinate Mn(2+): Glu-208, Gly-212, and Asp-214. Lys-277 contacts ATP. A pyridoxal 5'-phosphate-binding site is contributed by Ser-308. Asn-311 serves as a coordination point for ATP.

Belongs to the serine/threonine dehydratase family. As to quaternary structure, homodimer. It depends on Mg(2+) as a cofactor. Mn(2+) serves as cofactor. Ca(2+) is required as a cofactor. Requires pyridoxal 5'-phosphate as cofactor. In terms of processing, modification of the active site Lys by its substrate Ser to lysino-D-alanine reduces but does not abolish enzyme activity.

It carries out the reaction L-serine = D-serine. The catalysed reaction is L-serine = pyruvate + NH4(+). It catalyses the reaction D-serine = pyruvate + NH4(+). With respect to regulation, allosterically activated by ATP, by magnesium, and possibly also by other divalent metal cations. Catalyzes the synthesis of D-serine from L-serine. Has dehydratase activity towards both L-serine and D-serine. In Schizosaccharomyces pombe (strain 972 / ATCC 24843) (Fission yeast), this protein is Serine racemase.